Consider the following 128-residue polypeptide: uncharacterized protein (128 aa).

Positions 1 to 24 are cleaved as a signal peptide; the sequence is MKMTKLTTLLLTATLGLASGAALA. Composition is skewed to low complexity over residues 24-44 and 52-70; these read AAESNAQSSNGQANSAANAGQ and NVAPNDVNNNDINTNGNTN. Positions 24–128 are disordered; the sequence is AAESNAQSSN…VNTKTDGTTQ (105 aa). The segment covering 71–82 has biased composition (polar residues); the sequence is STMQHPDGSTMN. A compositionally biased stretch (basic and acidic residues) spans 85–110; the sequence is GMTKDEEHKNTMCKDGRCPDINKKVE. The span at 113–128 shows a compositional bias: polar residues; sequence NGVNNDVNTKTDGTTQ.

This is an uncharacterized protein from Salmonella typhi.